A 438-amino-acid chain; its full sequence is Thymidine phosphorylase (438 aa).

Belongs to the thymidine/pyrimidine-nucleoside phosphorylase family. As to quaternary structure, homodimer.

It catalyses the reaction thymidine + phosphate = 2-deoxy-alpha-D-ribose 1-phosphate + thymine. The protein operates within pyrimidine metabolism; dTMP biosynthesis via salvage pathway; dTMP from thymine: step 1/2. In terms of biological role, the enzymes which catalyze the reversible phosphorolysis of pyrimidine nucleosides are involved in the degradation of these compounds and in their utilization as carbon and energy sources, or in the rescue of pyrimidine bases for nucleotide synthesis. The polypeptide is Thymidine phosphorylase (Agrobacterium fabrum (strain C58 / ATCC 33970) (Agrobacterium tumefaciens (strain C58))).